The chain runs to 267 residues: Corrinoid adenosyltransferase EutT (267 aa).

C80 and C83 together coordinate a divalent metal cation.

Belongs to the Cob(I)alamin adenosyltransferase family. EutT subfamily. Homodimer. Requires a divalent metal cation as cofactor.

It localises to the bacterial microcompartment. It carries out the reaction 2 cob(II)alamin + reduced [electron-transfer flavoprotein] + 2 ATP + 2 H2O = 2 adenosylcob(III)alamin + oxidized [electron-transfer flavoprotein] + 2 phosphate + 2 diphosphate + 3 H(+). It catalyses the reaction 2 cob(II)inamide + reduced [electron-transfer flavoprotein] + 2 ATP + 2 H2O = 2 adenosylcob(III)inamide + oxidized [electron-transfer flavoprotein] + 2 phosphate + 2 diphosphate + 3 H(+). It functions in the pathway amine and polyamine degradation; ethanolamine degradation. In terms of biological role, converts cyanocobalamin (CN-B12) to adenosylcobalamin (AdoCbl), the inducer of the eut operon. Is not active on cobinamide nor other intermediates in the adenosylcobalamin synthetic pathway. Allows full induction of the eut operon. Can use ADP, CTP and dATP in place of ATP, and cobinamide in place of cobalamin, none are as efficiently used as ATP and cobalamin. Expression of the eut operon allows this bacteria to use ethanolamine (EA) as a carbon, nitrogen and energy source. It relies on cobalamin (vitamin B12) both as a cofactor for the ethanolamine ammonia-lyase (EAL) activity and to induce the operon. EA enhances bacterial survival in macrophages in a concentration-dependent manner, suggesting it is an important nutrient during infection. The protein is Corrinoid adenosyltransferase EutT of Salmonella typhimurium (strain LT2 / SGSC1412 / ATCC 700720).